Consider the following 1235-residue polypeptide: Major DNA-binding protein (1235 aa).

The disordered stretch occupies residues 536 to 584; that stretch reads GGLDGKGDDGVPGGGAGGGGGRDVSGGPSDGLGGGRGGGGGGDSGGMMG. Residues 545-584 show a composition bias toward gly residues; that stretch reads GVPGGGAGGGGGRDVSGGPSDGLGGGRGGGGGGDSGGMMG. Positions 846–847 match the Required for filament formation motif; the sequence is FW. Gly residues predominate over residues 1214–1226; that stretch reads GVGGSSGGGGGSG. The interval 1214–1235 is disordered; sequence GVGGSSGGGGGSGLLPAKRSRL. Residues 1232-1235 are required for nuclear localization; it reads RSRL.

It belongs to the herpesviridae major DNA-binding protein family. As to quaternary structure, homooligomers. Forms double-helical filaments necessary for the formation of replication compartments within the host nucleus. Interacts with the origin-binding protein. Interacts with the helicase primase complex; this interaction stimulates primer synthesis activity of the helicase-primase complex. Interacts with the DNA polymerase. Interacts with the alkaline exonuclease; this interaction increases its nuclease processivity.

It is found in the host nucleus. Plays several crucial roles in viral infection. Participates in the opening of the viral DNA origin to initiate replication by interacting with the origin-binding protein. May disrupt loops, hairpins and other secondary structures present on ssDNA to reduce and eliminate pausing of viral DNA polymerase at specific sites during elongation. Promotes viral DNA recombination by performing strand-transfer, characterized by the ability to transfer a DNA strand from a linear duplex to a complementary single-stranded DNA circle. Can also catalyze the renaturation of complementary single strands. Additionally, reorganizes the host cell nucleus, leading to the formation of prereplicative sites and replication compartments. This process is driven by the protein which can form double-helical filaments in the absence of DNA. This chain is Major DNA-binding protein, found in Homo sapiens (Human).